The following is a 132-amino-acid chain: Outer membrane protein assembly factor BamE (132 aa).

An N-terminal signal peptide occupies residues 1-16 (MQKLVLTLLVTSLLAG). Residue C17 is the site of N-palmitoyl cysteine attachment. C17 carries S-diacylglycerol cysteine lipidation.

This sequence belongs to the BamE family. In terms of assembly, part of the Bam complex.

It localises to the cell outer membrane. Part of the outer membrane protein assembly complex, which is involved in assembly and insertion of beta-barrel proteins into the outer membrane. The polypeptide is Outer membrane protein assembly factor BamE (Acinetobacter pittii (strain PHEA-2)).